Consider the following 889-residue polypeptide: Inter-alpha-trypsin inhibitor heavy chain H3 (889 aa).

The first 21 residues, 1–21 (MRTMWWPCLVLALLSGLETSG), serve as a signal peptide directing secretion. The propeptide occupies 22–33 (FPRSPLQLLGKR). Positions 29–158 (LLGKRSLPEG…KVTFELTYEE (130 aa)) constitute a VIT domain. N91 is a glycosylation site (N-linked (GlcNAc...) asparagine). One can recognise a VWFA domain in the interval 284–467 (NIVFVIDVSG…LQLQGFYEEV (184 aa)). A glycan (N-linked (GlcNAc...) asparagine) is linked at N580. Position 649 is an aspartate 1-(chondroitin 4-sulfate)-ester (D649). Positions 650-889 (PHFIIQIPGK…HTDYIVPSLF (240 aa)) are excised as a propeptide.

Belongs to the ITIH family. In terms of assembly, I-alpha-I plasma protease inhibitors are assembled from one or two heavy chains (HC) and one light chain, bikunin. Pre-alpha-inhibitor (P-alpha-I) is composed of ITIH3/HC3 and bikunin. Heavy chains are linked to bikunin via chondroitin 4-sulfate esterified to the alpha-carboxyl of the C-terminal aspartate after propeptide cleavage. As to expression, expressed in both liver and brain.

Its subcellular location is the secreted. May act as a carrier of hyaluronan in serum or as a binding protein between hyaluronan and other matrix protein, including those on cell surfaces in tissues to regulate the localization, synthesis and degradation of hyaluronan which are essential to cells undergoing biological processes. The chain is Inter-alpha-trypsin inhibitor heavy chain H3 (Itih3) from Mus musculus (Mouse).